A 243-amino-acid chain; its full sequence is uncharacterized protein (243 aa).

Residues C120 and C157 each contribute to the [4Fe-4S] cluster site.

As to quaternary structure, homodimer. [4Fe-4S] cluster serves as cofactor.

This is an uncharacterized protein from Methanocaldococcus jannaschii (strain ATCC 43067 / DSM 2661 / JAL-1 / JCM 10045 / NBRC 100440) (Methanococcus jannaschii).